Consider the following 292-residue polypeptide: UPF0696 protein C11orf68 homolog (292 aa).

Low complexity predominate over residues 1–10 (MAAAAAAVAG). Residues 1 to 60 (MAAAAAAVAGAGRGGGGGAEPRQERSRARGWAGAERSEGRRMEPGEELEEEDSPGGREDG) are disordered. The span at 35 to 44 (ERSEGRRMEP) shows a compositional bias: basic and acidic residues.

The protein belongs to the UPF0696 family.

The sequence is that of UPF0696 protein C11orf68 homolog from Bos taurus (Bovine).